A 484-amino-acid chain; its full sequence is Sushi domain-containing protein 4 (484 aa).

A signal peptide spans 1–35; that stretch reads MFHHADKGGKKSAFGHPVCGQIILSIILLRPPLLV. Sushi domains follow at residues 46–110, 111–168, 169–230, and 232–295; these read QICK…VCLS, EDCL…QPTC, QGCL…RCLD, and EACS…YCVK. 8 cysteine pairs are disulfide-bonded: cysteine 48–cysteine 90, cysteine 76–cysteine 108, cysteine 113–cysteine 156, cysteine 138–cysteine 168, cysteine 171–cysteine 215, cysteine 201–cysteine 228, cysteine 234–cysteine 280, and cysteine 265–cysteine 293. N-linked (GlcNAc...) asparagine glycosylation is found at asparagine 95 and asparagine 125. The N-linked (GlcNAc...) asparagine glycan is linked to asparagine 183. The helical transmembrane segment at 311–331 threads the bilayer; that stretch reads WKVVACTATSVLLALLLVITA. Residues 374-484 form a disordered region; it reads SGNYCQPPND…PLVEDGEEDC (111 aa). Polar residues-rich tracts occupy residues 424 to 442 and 449 to 467; these read DSLSDTSECLQGLQPSSSH and SEKTNAITSMEETASTSPS. Over residues 470–484 the composition is skewed to acidic residues; that stretch reads IADEIPLVEDGEEDC.

Its subcellular location is the membrane. This chain is Sushi domain-containing protein 4 (susd4), found in Danio rerio (Zebrafish).